Consider the following 360-residue polypeptide: Squamosa promoter-binding-like protein 7 (360 aa).

Over residues 74 to 89 (AQGSGGGGGGGGGGSA) the composition is skewed to gly residues. Residues 74-98 (AQGSGGGGGGGGGGSADQGKRKEKA) form a disordered region. The SBP-type zinc-finger motif lies at 105–182 (VPRCQVEGCD…AGHNERRRRS (78 aa)). Positions 108, 113, 130, 133, 149, 152, 156, and 168 each coordinate Zn(2+). The Bipartite nuclear localization signal motif lies at 165-181 (KKSCRRRLAGHNERRRR). Residues 172 to 182 (LAGHNERRRRS) show a composition bias toward basic residues. Disordered stretches follow at residues 172 to 196 (LAGH…AHPH), 261 to 306 (FFSD…HENQ), and 318 to 360 (TTAA…ARVV).

As to expression, expressed in young panicles.

Its subcellular location is the nucleus. In terms of biological role, trans-acting factor that binds specifically to the consensus nucleotide sequence 5'-TNCGTACAA-3'. May be involved in panicle development. The sequence is that of Squamosa promoter-binding-like protein 7 (SPL7) from Oryza sativa subsp. japonica (Rice).